A 465-amino-acid chain; its full sequence is ATP synthase subunit beta (465 aa).

Position 152–159 (152–159 (GGAGVGKT)) interacts with ATP.

This sequence belongs to the ATPase alpha/beta chains family. F-type ATPases have 2 components, CF(1) - the catalytic core - and CF(0) - the membrane proton channel. CF(1) has five subunits: alpha(3), beta(3), gamma(1), delta(1), epsilon(1). CF(0) has three main subunits: a(1), b(2) and c(9-12). The alpha and beta chains form an alternating ring which encloses part of the gamma chain. CF(1) is attached to CF(0) by a central stalk formed by the gamma and epsilon chains, while a peripheral stalk is formed by the delta and b chains.

Its subcellular location is the cell inner membrane. It catalyses the reaction ATP + H2O + 4 H(+)(in) = ADP + phosphate + 5 H(+)(out). Functionally, produces ATP from ADP in the presence of a proton gradient across the membrane. The catalytic sites are hosted primarily by the beta subunits. This Campylobacter jejuni subsp. jejuni serotype O:6 (strain 81116 / NCTC 11828) protein is ATP synthase subunit beta.